A 102-amino-acid chain; its full sequence is Gastrin/cholecystokinin-like peptide (102 aa).

A signal peptide spans 1 to 20 (MDKKVCVSILLAMLAIAALC). Residues 21 to 45 (RPMTELESARHGAQRKNSISDVSRR) constitute a propeptide that is removed on maturation. Tyrosine 86 is subject to Sulfotyrosine. Phenylalanine 92 carries the phenylalanine amide modification. Positions 96 to 102 (SSEVTES) are excised as a propeptide.

The protein belongs to the gastrin/cholecystokinin family. In terms of tissue distribution, expressed in antrum, duodenum, colon, pancreas, brain and testis. No expression found in kidney, lung, liver, skin or distal two-thirds of small intestine. In the brain, strongly expressed in the pituitary gland with moderate expression in the neural lobe, brain stem and hypothalamus.

The protein resides in the secreted. Its function is as follows. May control digestion processes. This chain is Gastrin/cholecystokinin-like peptide (GAST), found in Aquarana catesbeiana (American bullfrog).